Here is an 876-residue protein sequence, read N- to C-terminus: SED5-binding protein 2 (876 aa).

Position 51 is a phosphoserine (serine 51). A zinc finger-like region spans residues 164-189 (CRRCRSYMNPFVVFINQGRKWQCNIC). Residues 300-324 (VSDEDDEESDGEEEDEDEEEEDVDN) are compositionally biased toward acidic residues. Residues 300 to 326 (VSDEDDEESDGEEEDEDEEEEDVDNSE) are disordered.

It belongs to the SEC23/SEC24 family. SEC24 subfamily. COPII is composed of at least five proteins: the SEC23/24 complex, the SEC13/31 complex and SAR1. Interacts with GRH1.

The protein resides in the cytoplasm. Its subcellular location is the golgi apparatus membrane. It localises to the endoplasmic reticulum membrane. Component of the COPII coat, that covers ER-derived vesicles involved in transport from the endoplasmic reticulum to the Golgi apparatus. COPII acts in the cytoplasm to promote the transport of secretory, plasma membrane, and vacuolar proteins from the endoplasmic reticulum to the Golgi complex. This Saccharomyces cerevisiae (strain ATCC 204508 / S288c) (Baker's yeast) protein is SED5-binding protein 2 (SFB2).